A 144-amino-acid polypeptide reads, in one-letter code: Large ribosomal subunit protein uL13 (144 aa).

Belongs to the universal ribosomal protein uL13 family. Part of the 50S ribosomal subunit.

Functionally, this protein is one of the early assembly proteins of the 50S ribosomal subunit, although it is not seen to bind rRNA by itself. It is important during the early stages of 50S assembly. In Mycoplasmopsis synoviae (strain 53) (Mycoplasma synoviae), this protein is Large ribosomal subunit protein uL13.